A 131-amino-acid chain; its full sequence is Small ribosomal subunit protein eS17A (131 aa).

It belongs to the eukaryotic ribosomal protein eS17 family. Component of the small ribosomal subunit (SSU). Mature yeast ribosomes consist of a small (40S) and a large (60S) subunit. The 40S small subunit contains 1 molecule of ribosomal RNA (18S rRNA) and at least 33 different proteins. The large 60S subunit contains 3 rRNA molecules (25S, 5.8S and 5S rRNA) and at least 46 different proteins.

The protein localises to the cytoplasm. Its function is as follows. Component of the ribosome, a large ribonucleoprotein complex responsible for the synthesis of proteins in the cell. The small ribosomal subunit (SSU) binds messenger RNAs (mRNAs) and translates the encoded message by selecting cognate aminoacyl-transfer RNA (tRNA) molecules. The large subunit (LSU) contains the ribosomal catalytic site termed the peptidyl transferase center (PTC), which catalyzes the formation of peptide bonds, thereby polymerizing the amino acids delivered by tRNAs into a polypeptide chain. The nascent polypeptides leave the ribosome through a tunnel in the LSU and interact with protein factors that function in enzymatic processing, targeting, and the membrane insertion of nascent chains at the exit of the ribosomal tunnel. This is Small ribosomal subunit protein eS17A (rps1701) from Schizosaccharomyces pombe (strain 972 / ATCC 24843) (Fission yeast).